A 300-amino-acid chain; its full sequence is 33 kDa chaperonin (300 aa).

2 disulfide bridges follow: Cys-247–Cys-249 and Cys-280–Cys-283.

Belongs to the HSP33 family. Post-translationally, under oxidizing conditions two disulfide bonds are formed involving the reactive cysteines. Under reducing conditions zinc is bound to the reactive cysteines and the protein is inactive.

The protein localises to the cytoplasm. Redox regulated molecular chaperone. Protects both thermally unfolding and oxidatively damaged proteins from irreversible aggregation. Plays an important role in the bacterial defense system toward oxidative stress. In Prochlorococcus marinus subsp. pastoris (strain CCMP1986 / NIES-2087 / MED4), this protein is 33 kDa chaperonin.